The primary structure comprises 267 residues: Tetrahydromethanopterin S-methyltransferase subunit C (267 aa).

A run of 7 helical transmembrane segments spans residues 19–39 (IMAI…FMPA), 40–60 (QFSF…ADAV), 75–95 (IGMI…SVGG), 96–116 (IAGP…IGVL), 131–151 (AMVE…VVIA), 162–182 (YVVA…GILH), and 221–241 (GLMA…WAFM).

This sequence belongs to the MtrC family. The complex is composed of 8 subunits; MtrA, MtrB, MtrC, MtrD, MtrE, MtrF, MtrG and MtrH.

Its subcellular location is the cell membrane. It carries out the reaction 5-methyl-5,6,7,8-tetrahydromethanopterin + coenzyme M + 2 Na(+)(in) = 5,6,7,8-tetrahydromethanopterin + methyl-coenzyme M + 2 Na(+)(out). Its pathway is one-carbon metabolism; methanogenesis from CO(2); methyl-coenzyme M from 5,10-methylene-5,6,7,8-tetrahydromethanopterin: step 2/2. Its function is as follows. Part of a complex that catalyzes the formation of methyl-coenzyme M and tetrahydromethanopterin from coenzyme M and methyl-tetrahydromethanopterin. This is an energy-conserving, sodium-ion translocating step. The chain is Tetrahydromethanopterin S-methyltransferase subunit C from Methanosarcina acetivorans (strain ATCC 35395 / DSM 2834 / JCM 12185 / C2A).